We begin with the raw amino-acid sequence, 336 residues long: Anthranilate phosphoribosyltransferase (336 aa).

5-phospho-alpha-D-ribose 1-diphosphate is bound by residues Gly79, 82–83, Thr87, 89–92, 107–115, and Ser119; these read GD, NIST, and KHGNRAMSS. Residue Gly79 participates in anthranilate binding. Residue Ser91 participates in Mg(2+) binding. Asn110 lines the anthranilate pocket. Residue Arg165 participates in anthranilate binding. Residues Asp225 and Glu226 each contribute to the Mg(2+) site.

This sequence belongs to the anthranilate phosphoribosyltransferase family. As to quaternary structure, homodimer. The cofactor is Mg(2+).

The catalysed reaction is N-(5-phospho-beta-D-ribosyl)anthranilate + diphosphate = 5-phospho-alpha-D-ribose 1-diphosphate + anthranilate. The protein operates within amino-acid biosynthesis; L-tryptophan biosynthesis; L-tryptophan from chorismate: step 2/5. Catalyzes the transfer of the phosphoribosyl group of 5-phosphorylribose-1-pyrophosphate (PRPP) to anthranilate to yield N-(5'-phosphoribosyl)-anthranilate (PRA). The polypeptide is Anthranilate phosphoribosyltransferase (Dictyoglomus turgidum (strain DSM 6724 / Z-1310)).